The sequence spans 366 residues: GTP cyclohydrolase 1 type 2 homolog (366 aa).

Positions 64, 65, 102, 326, and 329 each coordinate Zn(2+).

The protein belongs to the GTP cyclohydrolase I type 2/NIF3 family. Homohexamer.

In Staphylococcus aureus (strain MSSA476), this protein is GTP cyclohydrolase 1 type 2 homolog.